Consider the following 179-residue polypeptide: Large ribosomal subunit protein uL6 (179 aa).

This sequence belongs to the universal ribosomal protein uL6 family. Part of the 50S ribosomal subunit.

This protein binds to the 23S rRNA, and is important in its secondary structure. It is located near the subunit interface in the base of the L7/L12 stalk, and near the tRNA binding site of the peptidyltransferase center. The chain is Large ribosomal subunit protein uL6 from Acaryochloris marina (strain MBIC 11017).